Consider the following 314-residue polypeptide: Pseudouridine-5'-phosphate glycosidase (314 aa).

Glu-30 acts as the Proton donor in catalysis. Positions 91 and 111 each coordinate substrate. Residue Asp-143 participates in Mn(2+) binding. Ser-145–Asp-147 contributes to the substrate binding site. The active-site Nucleophile is Lys-164.

Belongs to the pseudouridine-5'-phosphate glycosidase family. As to quaternary structure, homotrimer. It depends on Mn(2+) as a cofactor.

The enzyme catalyses D-ribose 5-phosphate + uracil = psi-UMP + H2O. Catalyzes the reversible cleavage of pseudouridine 5'-phosphate (PsiMP) to ribose 5-phosphate and uracil. Functions biologically in the cleavage direction, as part of a pseudouridine degradation pathway. The protein is Pseudouridine-5'-phosphate glycosidase of Cupriavidus pinatubonensis (strain JMP 134 / LMG 1197) (Cupriavidus necator (strain JMP 134)).